A 620-amino-acid polypeptide reads, in one-letter code: Glutathione-regulated potassium-efflux system protein KefC (620 aa).

Transmembrane regions (helical) follow at residues 4–24 (HTLIQALIYLGSAALIVPIAV), 26–46 (LGLGSVLGYLIAGCIIGPWGL), 54–74 (SILHFAEIGVVLMLFIIGLEL), 90–110 (GALQMVICGGLLGLFCMLLGL), 114–134 (VAELIGMTLALSSTAIAMQAM), 149–169 (FAVLLFQDIAAIPLVAMIPLL), 178–198 (MGAFVLSALKVAGALALVVLL), 218–238 (VFSAVALFLVFGFGLLLEEVG), 270–290 (GLLLGLFFIGVGMSIDFGTLI), 294–314 (LRIVILLLGFLIIKIAMLWLI), 327–347 (WFAVLLGQGSEFAFVVFGAAQ), and 359–379 (SLTLAVALSMAATPILLVILN). The region spanning 399-518 (QPRVIIAGFG…AGVEKPERET (120 aa)) is the RCK N-terminal domain. The interval 597 to 620 (GWQGTEEGKHTGNMADEPETKPSS) is disordered.

The protein belongs to the monovalent cation:proton antiporter 2 (CPA2) transporter (TC 2.A.37) family. KefC subfamily. In terms of assembly, homodimer. Interacts with the regulatory subunit KefF.

The protein resides in the cell inner membrane. In terms of biological role, pore-forming subunit of a potassium efflux system that confers protection against electrophiles. Catalyzes K(+)/H(+) antiport. The protein is Glutathione-regulated potassium-efflux system protein KefC of Escherichia coli O45:K1 (strain S88 / ExPEC).